A 434-amino-acid chain; its full sequence is MKLLVLGVNHETAPVDIREKVSFSPAQVQNALSELKSQGLANESVILSTCNRTEIYTTLKSQSPEKIRAWLHEYFELEEDSINSFLYEYADIEAIKHMMRVSSGLNSLVLGEPQILGQIKEAFHLAHKSDSVHQTLHALFQYIFKTAKQVRTDTAIGSSPVSVAFSAVALSKQFFGKLENQTALLLGAGETVELVARHLKESHIGNLIIANRTLSKAHQLTESLGGYAISLHEIDDHLHEADIVIASTASPTPILKTEMVANALKKRRNKPMFMIDIAVPRDIEPAIGNFSDTYLYTVDDLQEIIEENKRSRKDAALEAEEIVELQAENFMAQYQATQQISPIIQRYRQQAYTLKEHALQDALHHLENGGDPQELLTKLANQLTNKILHTPTTNLHHAGLNGQKEVIQAAEQILLTQQSDASDSSENENTHATS.

Substrate is bound by residues 49–52, S107, 112–114, and Q118; these read TCNR and EPQ. Catalysis depends on C50, which acts as the Nucleophile. 187–192 contacts NADP(+); sequence GAGETV.

It belongs to the glutamyl-tRNA reductase family. As to quaternary structure, homodimer.

The catalysed reaction is (S)-4-amino-5-oxopentanoate + tRNA(Glu) + NADP(+) = L-glutamyl-tRNA(Glu) + NADPH + H(+). The protein operates within porphyrin-containing compound metabolism; protoporphyrin-IX biosynthesis; 5-aminolevulinate from L-glutamyl-tRNA(Glu): step 1/2. Catalyzes the NADPH-dependent reduction of glutamyl-tRNA(Glu) to glutamate 1-semialdehyde (GSA). In Hydrogenovibrio crunogenus (strain DSM 25203 / XCL-2) (Thiomicrospira crunogena), this protein is Glutamyl-tRNA reductase.